The following is a 128-amino-acid chain: Probable 4-amino-4-deoxy-L-arabinose-phosphoundecaprenol flippase subunit ArnF (128 aa).

The chain crosses the membrane as a helical span at residues 1–21 (MGLMWGLFSVIIASAAQLSLG). The Periplasmic segment spans residues 22 to 35 (YAASHLPPMTQFWD). The chain crosses the membrane as a helical span at residues 36 to 56 (FIAAFFAFGPGARMLVVGLVG). Topologically, residues 57–76 (YLLSVFCWYKALHQLALSKA) are cytoplasmic. Residues 77–97 (YALLSMSYVLVWIASMVLPGW) form a helical membrane-spanning segment. Residues 98-100 (EGT) lie on the Periplasmic side of the membrane. A helical transmembrane segment spans residues 101-121 (FSLKALLGVACIMSGLMLIFL). The Cytoplasmic portion of the chain corresponds to 122-128 (PTTKQRY).

This sequence belongs to the ArnF family. As to quaternary structure, heterodimer of ArnE and ArnF.

The protein resides in the cell inner membrane. Its pathway is bacterial outer membrane biogenesis; lipopolysaccharide biosynthesis. In terms of biological role, translocates 4-amino-4-deoxy-L-arabinose-phosphoundecaprenol (alpha-L-Ara4N-phosphoundecaprenol) from the cytoplasmic to the periplasmic side of the inner membrane. The polypeptide is Probable 4-amino-4-deoxy-L-arabinose-phosphoundecaprenol flippase subunit ArnF (Escherichia fergusonii (strain ATCC 35469 / DSM 13698 / CCUG 18766 / IAM 14443 / JCM 21226 / LMG 7866 / NBRC 102419 / NCTC 12128 / CDC 0568-73)).